The primary structure comprises 124 residues: Small ribosomal subunit protein uS12 (124 aa).

Position 89 is a 3-methylthioaspartic acid (Asp-89). The interval 101–124 is disordered; it reads TLDTSGVKDRRQSRSKYGAKAPKE.

This sequence belongs to the universal ribosomal protein uS12 family. In terms of assembly, part of the 30S ribosomal subunit. Contacts proteins S8 and S17. May interact with IF1 in the 30S initiation complex.

Its function is as follows. With S4 and S5 plays an important role in translational accuracy. In terms of biological role, interacts with and stabilizes bases of the 16S rRNA that are involved in tRNA selection in the A site and with the mRNA backbone. Located at the interface of the 30S and 50S subunits, it traverses the body of the 30S subunit contacting proteins on the other side and probably holding the rRNA structure together. The combined cluster of proteins S8, S12 and S17 appears to hold together the shoulder and platform of the 30S subunit. The chain is Small ribosomal subunit protein uS12 from Synechococcus sp. (strain CC9902).